A 105-amino-acid chain; its full sequence is Small ribosomal subunit protein eS10B (105 aa).

The protein belongs to the eukaryotic ribosomal protein eS10 family. In terms of assembly, component of the small ribosomal subunit (SSU). Mature yeast ribosomes consist of a small (40S) and a large (60S) subunit. The 40S small subunit contains 1 molecule of ribosomal RNA (18S rRNA) and 33 different proteins (encoded by 57 genes). The large 60S subunit contains 3 rRNA molecules (25S, 5.8S and 5S rRNA) and 46 different proteins (encoded by 81 genes). eS10 interacts with GCN1 (via middle region); this interaction is direct and promotes GCN2 kinase activity. Post-translationally, the N-terminus is not modified.

The protein localises to the cytoplasm. In terms of biological role, component of the ribosome, a large ribonucleoprotein complex responsible for the synthesis of proteins in the cell. The small ribosomal subunit (SSU) binds messenger RNAs (mRNAs) and translates the encoded message by selecting cognate aminoacyl-transfer RNA (tRNA) molecules. The large subunit (LSU) contains the ribosomal catalytic site termed the peptidyl transferase center (PTC), which catalyzes the formation of peptide bonds, thereby polymerizing the amino acids delivered by tRNAs into a polypeptide chain. The nascent polypeptides leave the ribosome through a tunnel in the LSU and interact with protein factors that function in enzymatic processing, targeting, and the membrane insertion of nascent chains at the exit of the ribosomal tunnel. eS10 plays a role as a positive regulator of the GCN2 kinase activity by stimulating GCN1-mediated GCN2 activation. This is Small ribosomal subunit protein eS10B from Saccharomyces cerevisiae (strain ATCC 204508 / S288c) (Baker's yeast).